Consider the following 293-residue polypeptide: CDP-abequose synthase (293 aa).

T113 contributes to the substrate binding site. The Proton acceptor role is filled by Y130.

Belongs to the NAD(P)-dependent epimerase/dehydratase family.

It carries out the reaction CDP-alpha-D-abequose + NADP(+) = CDP-4-dehydro-3,6-dideoxy-alpha-D-glucose + NADPH + H(+). The protein operates within bacterial outer membrane biogenesis; LPS O-antigen biosynthesis. The polypeptide is CDP-abequose synthase (Salmonella muenchen).